A 1114-amino-acid polypeptide reads, in one-letter code: Transcriptional repressor NF-X1 (1114 aa).

The tract at residues 9–26 (GTFKFNTDAAEFIPQERK) is interaction with PABPC1 and PABC4. Disordered regions lie at residues 20–220 (FIPQ…CRKP), 232–287 (QRRY…PTKS), and 299–325 (KSSR…FPRG). Residues Ser-50, Ser-81, Ser-92, Ser-126, Ser-130, and Ser-147 each carry the phosphoserine modification. Composition is skewed to polar residues over residues 72 to 103 (SYAS…NQPW) and 121 to 142 (LSEQ…SGTN). Basic and acidic residues-rich tracts occupy residues 143–156 (PREH…KEVV), 185–202 (LRSE…DENT), 232–248 (QRRY…EGAR), and 304–315 (VNQEKTAVRRQD). A Phosphoserine modification is found at Ser-320. An RING-type; atypical zinc finger spans residues 352–403 (CMVCCELVQVTAPVWSCQSCFHVFHLNCIKKWARSPASHADGQSGWRCPACQ). 8 consecutive NF-X1-type zinc fingers follow at residues 447–465 (CPHS…PCPA), 500–519 (CGQH…PCRI), 561–580 (CGSH…PCPR), 626–649 (CGSS…PCSR), 688–707 (CGRH…KCPL), 715–734 (CGLH…TCWQ), 826–848 (CGMH…ACKQ), and 857–878 (CGHP…ACKA). The 69-residue stretch at 988–1056 (LKFVSDVEKE…KRNVVVTAVR (69 aa)) folds into the R3H domain. Residues 1071–1095 (ERETQTRPPPPIPHHRHQADKAPGS) are disordered.

Belongs to the NFX1 family. Interacts with PABPC1 and PABPC4. In terms of tissue distribution, ubiquitously expressed, with highest levels in thymus.

The protein localises to the nucleus. In terms of biological role, binds to the X-box motif of MHC class II genes and represses their expression. May play an important role in regulating the duration of an inflammatory response by limiting the period in which MHC class II molecules are induced by interferon-gamma. Together with PABPC1 or PABPC4, acts as a coactivator for TERT expression. Mediates E2-dependent ubiquitination. The sequence is that of Transcriptional repressor NF-X1 (Nfx1) from Mus musculus (Mouse).